A 266-amino-acid chain; its full sequence is Oxidoreductase aflX (266 aa).

It belongs to the avfA family.

It participates in mycotoxin biosynthesis; aflatoxin biosynthesis. Its function is as follows. Oxidoreductase; part of the gene cluster that mediates the biosynthesis of aflatoxins, a group of polyketide-derived furanocoumarins, and part of the most toxic and carcinogenic compounds among the known mycotoxins. The four major aflatoxins produced by A.parasiticus are aflatoxin B1 (AFB1), aflatoxin B2 (AFB2), aflatoxin G1 (AFG1) and aflatoxin G2 (AFG2). Within the aflatoxin pathway, the oxidoreductase aflX seems to be involved in the conversion of versicolorin A (VERA) to demethylsterigmatocystin (DMST), through probable epoxide ring-opening step following versicolorin A oxidation required for the formation of the xanthone ring. The biosynthesis of aflatoxins begins with the norsolorinic acid synthase aflC that combines a hexanoyl starter unit produced by the fatty acid synthase aflA/aflB and 7 malonyl-CoA extender units to synthesize the precursor NOR. The second step is the conversion of NOR to averantin and requires the norsolorinic acid ketoreductase aflD, which catalyzes the dehydration of norsolorinic acid to form (1'S)-averantin. The norsolorinic acid reductases aflE and aflF may also play a role in the conversion of NOR to AVN. The cytochrome P450 monooxygenase aflG then catalyzes the hydroxylation of AVN to 5'hydroxyaverantin (HAVN). The next step is performed by the 5'-hydroxyaverantin dehydrogenase aflH that transforms HAVN to 5'-oxoaverantin (OAVN) which is further converted to averufin (AVF) by aflK that plays a dual role in the pathway, as a 5'-oxoaverantin cyclase that mediates conversion of 5'-oxoaverantin, as well as a versicolorin B synthase in a later step in the pathway. The averufin oxidase aflI catalyzes the conversion of AVF to versiconal hemiacetal acetate (VHA). VHA is then the substrate for the versiconal hemiacetal acetate esterase aflJ to yield versiconal (VAL). Versicolorin B synthase aflK then converts VAL to versicolorin B (VERB) by closing the bisfuran ring of aflatoxin which is required for DNA-binding, thus giving to aflatoxin its activity as a mutagen. Then, the activity of the versicolorin B desaturase aflL leads to versicolorin A (VERA). A branch point starts from VERB since it can also be converted to dihydrodemethylsterigmatocystin (DMDHST), probably also by aflL, VERA being a precursor for aflatoxins B1 and G1, and DMDHST for aflatoxins B2 and G2. Next, the versicolorin reductase aflM and the cytochrome P450 monooxygenase aflN are involved in conversion of VERA to demethylsterigmatocystin (DMST). AflX and aflY seem also involved in this step, through probable aflX-mediated epoxide ring-opening step following versicolorin A oxidation and aflY-mediated Baeyer-Villiger oxidation required for the formation of the xanthone ring. The methyltransferase aflO then leads to the modification of DMST to sterigmatocystin (ST), and of DMDHST to dihydrosterigmatocystin (DHST). Both ST and DHST are then substrates of the O-methyltransferase aflP to yield O-methylsterigmatocystin (OMST) and dihydro-O-methylsterigmatocystin (DHOMST), respectively. Finally OMST is converted to aflatoxins B1 and G1, and DHOMST to aflatoxins B2 and G2, via the action of several enzymes including O-methylsterigmatocystin oxidoreductase aflQ, the cytochrome P450 monooxygenase aflU, but also the NADH-dependent flavin oxidoreductase nadA which is specifically required for the synthesis of AFG1. This is Oxidoreductase aflX from Aspergillus parasiticus (strain ATCC 56775 / NRRL 5862 / SRRC 143 / SU-1).